The following is a 303-amino-acid chain: N-acetyl-D-glucosamine kinase (303 aa).

ATP contacts are provided by residues glycine 4–lysine 11 and glycine 133–phenylalanine 140. 4 residues coordinate Zn(2+): histidine 157, cysteine 177, cysteine 179, and cysteine 184.

The protein belongs to the ROK (NagC/XylR) family. NagK subfamily.

The enzyme catalyses N-acetyl-D-glucosamine + ATP = N-acetyl-D-glucosamine 6-phosphate + ADP + H(+). It participates in cell wall biogenesis; peptidoglycan recycling. Its function is as follows. Catalyzes the phosphorylation of N-acetyl-D-glucosamine (GlcNAc) derived from cell-wall degradation, yielding GlcNAc-6-P. This is N-acetyl-D-glucosamine kinase from Shigella sonnei (strain Ss046).